Here is a 331-residue protein sequence, read N- to C-terminus: NAD-dependent protein deacetylase HST2 (331 aa).

Residues 1–262 enclose the Deacetylase sirtuin-type domain; that stretch reads MPSLDDILKP…EKLCTLLGLD (262 aa). Residues 26 to 46 and 109 to 112 contribute to the NAD(+) site; these read GAGI…TGLY and QNID. Residue histidine 129 is the Proton acceptor of the active site. Zn(2+) contacts are provided by cysteine 137, cysteine 140, cysteine 161, and cysteine 164. NAD(+) is bound by residues 201 to 203, 226 to 228, and cysteine 248; these read GTS and NKE. A coiled-coil region spans residues 276–331; the sequence is YSKAETKETKMHEIEDKLKEEAHLKEDKHTTKVDKKEKQNDANDKELEQLIDKLKI. The segment at 283-319 is disordered; it reads ETKMHEIEDKLKEEAHLKEDKHTTKVDKKEKQNDAND.

It belongs to the sirtuin family. Class I subfamily. Requires Zn(2+) as cofactor.

The protein localises to the cytoplasm. Its subcellular location is the nucleus. It carries out the reaction N(6)-acetyl-L-lysyl-[protein] + NAD(+) + H2O = 2''-O-acetyl-ADP-D-ribose + nicotinamide + L-lysyl-[protein]. NAD-dependent histone deacetylase that is involved in nuclear silencing events. Derepresses subtelomeric silencing and increases repression in nucleolar (rDNA) silencing. Its function is negatively regulated by active nuclear export. This Candida albicans (strain SC5314 / ATCC MYA-2876) (Yeast) protein is NAD-dependent protein deacetylase HST2 (HST2).